An 89-amino-acid chain; its full sequence is Small ribosomal subunit protein uS17 (89 aa).

It belongs to the universal ribosomal protein uS17 family. As to quaternary structure, part of the 30S ribosomal subunit.

In terms of biological role, one of the primary rRNA binding proteins, it binds specifically to the 5'-end of 16S ribosomal RNA. The polypeptide is Small ribosomal subunit protein uS17 (Bacteroides fragilis (strain ATCC 25285 / DSM 2151 / CCUG 4856 / JCM 11019 / LMG 10263 / NCTC 9343 / Onslow / VPI 2553 / EN-2)).